Consider the following 132-residue polypeptide: DNA-directed RNA polymerase subunit omega (132 aa).

The segment at 90–109 (SSEAGGVLGTSSEEEGSSFD) is disordered.

It belongs to the RNA polymerase subunit omega family. As to quaternary structure, the RNAP catalytic core consists of 2 alpha, 1 beta, 1 beta' and 1 omega subunit. When a sigma factor is associated with the core the holoenzyme is formed, which can initiate transcription.

The catalysed reaction is RNA(n) + a ribonucleoside 5'-triphosphate = RNA(n+1) + diphosphate. Its function is as follows. Promotes RNA polymerase assembly. Latches the N- and C-terminal regions of the beta' subunit thereby facilitating its interaction with the beta and alpha subunits. This is DNA-directed RNA polymerase subunit omega from Bartonella henselae (strain ATCC 49882 / DSM 28221 / CCUG 30454 / Houston 1) (Rochalimaea henselae).